Reading from the N-terminus, the 286-residue chain is MKIEGVLIPLITPFKDGKVDLASYEKLIRHYSKKGVAGFMPLATTGETPTLSDYEYQSILEKTVECNELNLPIYVGFGGNNTEKMTKDIKMLDKYNIKGILSVCPYYNRPDQRGIYEHFKRISESTSLDIVLYNIPYRTGRNIENDTIRRLSELDNIVGVKDACGDFTQTTELLLNRPDNFSILTGEDAFFYSTLMLGGDGGIMASAHLNTEKYVEVFNKSKQNDYKSALEIWKQVANMIPLLFEEPNPAPIKYCLSKTGVIASEALRLPLVPISENLKEKLNKFL.

Position 45 (Thr-45) interacts with pyruvate. The Proton donor/acceptor role is filled by Tyr-133. Lys-161 acts as the Schiff-base intermediate with substrate in catalysis. Pyruvate is bound at residue Ile-203.

It belongs to the DapA family. In terms of assembly, homotetramer; dimer of dimers.

It localises to the cytoplasm. It catalyses the reaction L-aspartate 4-semialdehyde + pyruvate = (2S,4S)-4-hydroxy-2,3,4,5-tetrahydrodipicolinate + H2O + H(+). Its pathway is amino-acid biosynthesis; L-lysine biosynthesis via DAP pathway; (S)-tetrahydrodipicolinate from L-aspartate: step 3/4. Functionally, catalyzes the condensation of (S)-aspartate-beta-semialdehyde [(S)-ASA] and pyruvate to 4-hydroxy-tetrahydrodipicolinate (HTPA). This is 4-hydroxy-tetrahydrodipicolinate synthase 2 from Clostridium acetobutylicum (strain ATCC 824 / DSM 792 / JCM 1419 / IAM 19013 / LMG 5710 / NBRC 13948 / NRRL B-527 / VKM B-1787 / 2291 / W).